Reading from the N-terminus, the 546-residue chain is MTPGEVRRLYFIIRTFLSYGLDELIPKMRITLPLRLWRYSLFWMPNRHKDKPLGERLRLALQELGPVWIKFGQMLSTRRDLFPPHIADQLALLQDKVAPFDGKLAKQQIEAAMGGLPVEAWFDDFEIKPLASASIAQVHTARLKSNGKEVVIKVIRPDILPVIKADLKLIYRLARWVPRLLPDGRRLRPTEVVREYEKTLIDELNLLRESANAIQLRRNFEDSPMLYIPEVYPDYCSEGMMVMERIYGIPVSDVATLEKNGTNMKLLAERGVQVFFTQVFRDSFFHADMHPGNIFVSYEHPENPKYIGIDCGIVGSLNKEDKRYLAENFIAFFNRDYRKVAELHVDSGWVPPDTNVEEFEFAIRTVCEPIFEKPLAEISFGHVLLNLFNTARRFNMEVQPQLVLLQKTLLYVEGVGRQLYPQLDLWKTAKPFLESWIKDQVGIPALVRAFKEKAPFWVEKMPELPELVYDSLRQGKYLQHSVDKIARELQSNHVRQGQSRYFLGIGATLVLSGTFLLVSRPEWGLMPGWLMAGGLIAWFVGWRKTR.

In terms of domain architecture, Protein kinase spans 124-502 (DFEIKPLASA…HVRQGQSRYF (379 aa)). Residues 130–138 (LASASIAQV) and Lys153 each bind ATP. Catalysis depends on Asp288, which acts as the Proton acceptor. A run of 2 helical transmembrane segments spans residues 501-521 (YFLG…VSRP) and 522-542 (EWGL…FVGW).

This sequence belongs to the ABC1 family. UbiB subfamily.

Its subcellular location is the cell inner membrane. The protein operates within cofactor biosynthesis; ubiquinone biosynthesis [regulation]. Functionally, is probably a protein kinase regulator of UbiI activity which is involved in aerobic coenzyme Q (ubiquinone) biosynthesis. This is Probable protein kinase UbiB from Escherichia coli O45:K1 (strain S88 / ExPEC).